A 463-amino-acid polypeptide reads, in one-letter code: Elongation factor 1-alpha (463 aa).

Residues 5 to 242 enclose the tr-type G domain; that stretch reads KVHINIVVIG…DSIIPPQRPT (238 aa). Positions 14 to 21 are G1; it reads GHVDSGKS. Residue 14-21 participates in GTP binding; the sequence is GHVDSGKS. Positions 70–74 are G2; sequence GITID. The interval 91–94 is G3; the sequence is DAPG. Residues 91–95 and 153–156 contribute to the GTP site; these read DAPGH and NKMD. Residues 153–156 are G4; that stretch reads NKMD. Residues 194-196 form a G5 region; that stretch reads SGF. A 5-glutamyl glycerylphosphorylethanolamine mark is found at Glu301 and Glu374. Residues 443 to 463 form a disordered region; it reads KSDGSSGKVTKSAQKAAPKKK. The segment covering 446 to 455 has biased composition (polar residues); sequence GSSGKVTKSA.

It belongs to the TRAFAC class translation factor GTPase superfamily. Classic translation factor GTPase family. EF-Tu/EF-1A subfamily.

The protein localises to the cytoplasm. Its function is as follows. This protein promotes the GTP-dependent binding of aminoacyl-tRNA to the A-site of ribosomes during protein biosynthesis. The polypeptide is Elongation factor 1-alpha (Caenorhabditis elegans).